A 295-amino-acid polypeptide reads, in one-letter code: 4-hydroxybenzoate octaprenyltransferase (295 aa).

Transmembrane regions (helical) follow at residues 28-48 (AGWL…AGGF), 51-71 (WHLL…GCCV), 101-121 (ALGV…TTNA), 124-144 (IAWS…KRFV), 159-179 (IPMA…WLVL), 220-240 (VMAF…PFGL), 242-262 (WPLH…WRLI), and 274-294 (FTGN…GFAL).

Belongs to the UbiA prenyltransferase family. Mg(2+) is required as a cofactor.

Its subcellular location is the cell inner membrane. It catalyses the reaction all-trans-octaprenyl diphosphate + 4-hydroxybenzoate = 4-hydroxy-3-(all-trans-octaprenyl)benzoate + diphosphate. It participates in cofactor biosynthesis; ubiquinone biosynthesis. Its function is as follows. Catalyzes the prenylation of para-hydroxybenzoate (PHB) with an all-trans polyprenyl group. Mediates the second step in the final reaction sequence of ubiquinone-8 (UQ-8) biosynthesis, which is the condensation of the polyisoprenoid side chain with PHB, generating the first membrane-bound Q intermediate 3-octaprenyl-4-hydroxybenzoate. This chain is 4-hydroxybenzoate octaprenyltransferase, found in Paracidovorax citrulli (strain AAC00-1) (Acidovorax citrulli).